A 522-amino-acid chain; its full sequence is Serine/threonine protein phosphatase 2A 59 kDa regulatory subunit B' gamma isoform (522 aa).

The segment at Met1–Gln74 is disordered. Positions Pro35–Asn58 are enriched in low complexity. Over residues Ala63–Gln74 the composition is skewed to polar residues.

The protein belongs to the phosphatase 2A regulatory subunit B56 family. PP2A consists of a common heteromeric enzyme, composed of a catalytic subunit (subunits C), a constant regulatory subunit (subunit A), and a variety of regulatory subunits such as subunits B (the R2/B/PR55/B55, R3/B''/PR72/PR130/PR59 and R5/B'/B56 families). Interacts with BRI1. Interacts with IGMT1 and IGMT4. Interacts with ACO3 in the cytosol. In terms of tissue distribution, expressed ubiquitously at low levels. Expressed in roots, emerging lateral roots, cotyledons, leaves, floral stalks and flowers.

Its subcellular location is the cytoplasm. It localises to the cytosol. The protein localises to the nucleus. In terms of biological role, the B regulatory subunit may modulate substrate selectivity and catalytic activity, and may also direct the localization of the catalytic enzyme to a particular subcellular compartment. Required for the formation of the PP2A holoenzyme that negatively regulates brassinosteroid signaling by dephosphorylating and inactivating BRI1 in the cytoplasm. Seems to be functionally connected with CPR5 and may mediate the negative regulation of defense reactions and senescence under low irradiances. May contribute to the epigenetic regulation of defense gene expression. Involved in the control of methoxylation of indole glucosinolates and formation of 4-methoxy- indol-3-yl-methyl glucosinolate in leaves, through direct interaction with indole glucosinolate methyltransferases. Involved in growth regulation and stress signaling. Involved in the regulation of reactive oxygen species (ROS) signaling and maintenance of cellular ROS homeostasis. Required to control the level of ACO3 phosphorylation in the cytoplasm. Regulates hydrogen peroxide metabolism by controlling the abundance of AOX1A and AXO3/AOX1D in leaf mitochondria. May mediate dephosphorylation of CRT1 and promote the degradation of unfolded proteins in endoplasmic reticulum (ER). Involved in the regulation of flowering time by repressing FLC, the main flowering repressor gene. The polypeptide is Serine/threonine protein phosphatase 2A 59 kDa regulatory subunit B' gamma isoform (B'GAMMA) (Arabidopsis thaliana (Mouse-ear cress)).